The sequence spans 209 residues: Redox-sensing transcriptional repressor Rex (209 aa).

A DNA-binding region (H-T-H motif) is located at residues 16 to 55 (LYYRFIQNLSLSGKQRVSSAELSEAVKVDSATIRRDFSYF). 90 to 95 (GVGNLG) contributes to the NAD(+) binding site.

This sequence belongs to the transcriptional regulatory Rex family. In terms of assembly, homodimer.

The protein localises to the cytoplasm. Its function is as follows. Modulates transcription in response to changes in cellular NADH/NAD(+) redox state. The polypeptide is Redox-sensing transcriptional repressor Rex (Bacillus cereus (strain G9842)).